The sequence spans 176 residues: Vitamin K epoxide reductase complex subunit 1-like protein 1 (176 aa).

At 1 to 13 (MAAPVLLRVSVPR) the chain is on the cytoplasmic side. A helical transmembrane segment spans residues 14-36 (WERVARYAVCAAGILLSIYAYHV). Residues 37-87 (EREKERDPEHRALCDLGPWVKCSAALASRWGRGFGLLGSIFGKDGVLNQPN) lie on the Lumenal side of the membrane. An intrachain disulfide couples cysteine 50 to cysteine 58. Asparagine 87 contacts (S)-warfarin. The helical transmembrane segment at 88 to 102 (SVFGLIFYILQLLLG) threads the bilayer. The Cytoplasmic segment spans residues 103 to 107 (MTASA). Residues 108-135 (VAALILMTSSIMSVVGSLYLAYILYFVL) traverse the membrane as a helical segment. At 136-138 (KEF) the chain is on the lumenal side. Cysteine 139 and cysteine 142 are joined by a disulfide. A helical transmembrane segment spans residues 139 to 160 (CIICIVTYVLNFLLLIINYKRL). Phylloquinone is bound by residues cysteine 142 and tyrosine 146. Tyrosine 146 contributes to the (S)-warfarin binding site. The Cytoplasmic segment spans residues 161 to 176 (VYLNEAWKRQLQPKQD).

It belongs to the VKOR family.

The protein resides in the endoplasmic reticulum membrane. It catalyses the reaction phylloquinone + [protein]-disulfide + H2O = 2,3-epoxyphylloquinone + [protein]-dithiol. The enzyme catalyses phylloquinol + [protein]-disulfide = phylloquinone + [protein]-dithiol. Its activity is regulated as follows. Inhibited by warfarin (coumadin). Warfarin locks VKORC1 in both redox states into the closed conformation. Its function is as follows. Involved in vitamin K metabolism. Can reduce inactive vitamin K 2,3-epoxide to active vitamin K, and may contribute to vitamin K-mediated protection against oxidative stress. Plays a role in vitamin K-dependent gamma-carboxylation of Glu residues in target proteins. This Homo sapiens (Human) protein is Vitamin K epoxide reductase complex subunit 1-like protein 1 (VKORC1L1).